The following is a 374-amino-acid chain: UPF0754 membrane protein NWMN_1738 (374 aa).

Helical transmembrane passes span 4 to 24 (LFII…TNVI) and 354 to 374 (SLGF…AIFV).

Belongs to the UPF0754 family.

It is found in the cell membrane. The chain is UPF0754 membrane protein NWMN_1738 from Staphylococcus aureus (strain Newman).